The sequence spans 470 residues: Cysteine--tRNA ligase (470 aa).

Cys-28 provides a ligand contact to Zn(2+). The short motif at 30-40 (PTVYNYIHIGN) is the 'HIGH' region element. Positions 212, 237, and 241 each coordinate Zn(2+). The short motif at 271–275 (KMSKS) is the 'KMSKS' region element. Lys-274 is a binding site for ATP.

This sequence belongs to the class-I aminoacyl-tRNA synthetase family. As to quaternary structure, monomer. Zn(2+) is required as a cofactor.

It localises to the cytoplasm. It catalyses the reaction tRNA(Cys) + L-cysteine + ATP = L-cysteinyl-tRNA(Cys) + AMP + diphosphate. This Limosilactobacillus reuteri (strain DSM 20016) (Lactobacillus reuteri) protein is Cysteine--tRNA ligase.